We begin with the raw amino-acid sequence, 380 residues long: Beta sliding clamp (380 aa).

Belongs to the beta sliding clamp family. In terms of assembly, forms a ring-shaped head-to-tail homodimer around DNA which binds and tethers DNA polymerases and other proteins to the DNA. The DNA replisome complex has a single clamp-loading complex (3 tau and 1 each of delta, delta', psi and chi subunits) which binds 3 Pol III cores (1 core on the leading strand and 2 on the lagging strand) each with a beta sliding clamp dimer. Additional proteins in the replisome are other copies of gamma, psi and chi, Ssb, DNA helicase and RNA primase.

It is found in the cytoplasm. Its function is as follows. Confers DNA tethering and processivity to DNA polymerases and other proteins. Acts as a clamp, forming a ring around DNA (a reaction catalyzed by the clamp-loading complex) which diffuses in an ATP-independent manner freely and bidirectionally along dsDNA. Initially characterized for its ability to contact the catalytic subunit of DNA polymerase III (Pol III), a complex, multichain enzyme responsible for most of the replicative synthesis in bacteria; Pol III exhibits 3'-5' exonuclease proofreading activity. The beta chain is required for initiation of replication as well as for processivity of DNA replication. The sequence is that of Beta sliding clamp (dnaN) from Mycoplasma genitalium (strain ATCC 33530 / DSM 19775 / NCTC 10195 / G37) (Mycoplasmoides genitalium).